We begin with the raw amino-acid sequence, 1142 residues long: Melanoma-associated antigen C1 (1142 aa).

A disordered region spans residues 1–132 (MGDKDMPTAG…DVQSPLQNPA (132 aa)). The span at 13 to 42 (SLLQSSSESPQSCPEGEDSQSPLQIPQSSP) shows a compositional bias: low complexity. Residue S63 is modified to Phosphoserine. The segment covering 76 to 87 (SQSPLQIPQSSP) has biased composition (low complexity). The segment covering 92-103 (TQSPLQNSQSSP) has biased composition (polar residues). Phosphoserine is present on residues S207 and S382. Disordered stretches follow at residues 502-778 (TQST…LQRP) and 791-893 (LQSS…SLTD). A compositionally biased stretch (polar residues) spans 614 to 626 (SPLQGEEFQSSLQ). Residues 627 to 659 (SPVSICSSSTPSSLPQSFPESSQSPPEGPVQSP) are compositionally biased toward low complexity. The span at 671-680 (HSQSPLQSPE) shows a compositional bias: polar residues. Low complexity-rich tracts occupy residues 741-762 (QSPV…FPES) and 807-889 (QSPL…LESD). An MAGE domain is found at 908 to 1106 (LDEKVDELAR…ITFPSSYKDA (199 aa)). S1063 is subject to Phosphoserine. The tract at residues 1118-1142 (IDTTDDSTATESASSSVMSPSFSSE) is disordered. A compositionally biased stretch (low complexity) spans 1123 to 1142 (DSTATESASSSVMSPSFSSE).

As to expression, expressed in testis and in tumors of a wide variety of histologic types.

It localises to the cytoplasm. The protein is Melanoma-associated antigen C1 (MAGEC1) of Homo sapiens (Human).